The following is a 351-amino-acid chain: Sulfate/thiosulfate import ATP-binding protein CysA (351 aa).

The region spanning 5-235 is the ABC transporter domain; sequence IVVADATKRY…PANAFVMSFL (231 aa). Position 37–44 (37–44) interacts with ATP; sequence GPSGSGKS.

It belongs to the ABC transporter superfamily. Sulfate/tungstate importer (TC 3.A.1.6) family. In terms of assembly, the complex is composed of two ATP-binding proteins (CysA), two transmembrane proteins (CysT and CysW) and a solute-binding protein (CysP).

It localises to the cell membrane. It carries out the reaction sulfate(out) + ATP + H2O = sulfate(in) + ADP + phosphate + H(+). The enzyme catalyses thiosulfate(out) + ATP + H2O = thiosulfate(in) + ADP + phosphate + H(+). Its function is as follows. Part of the ABC transporter complex CysAWTP involved in sulfate/thiosulfate import. Responsible for energy coupling to the transport system. This is Sulfate/thiosulfate import ATP-binding protein CysA from Mycobacterium bovis (strain ATCC BAA-935 / AF2122/97).